A 731-amino-acid polypeptide reads, in one-letter code: Alpha-1,4-glucan:maltose-1-phosphate maltosyltransferase (731 aa).

Residues 1 to 10 show a composition bias toward basic and acidic residues; that stretch reads MEAQHNETEA. Positions 1–31 are disordered; it reads MEAQHNETEAAGKPAAKKTTRTRKPRASKQA. Residues 15–27 show a composition bias toward basic residues; sequence AAKKTTRTRKPRA. Lys321, Gln381, and Asp416 together coordinate alpha-maltose 1-phosphate. The active-site Nucleophile is Asp451. Asn452 serves as a coordination point for alpha-maltose 1-phosphate. Glu480 (proton donor) is an active-site residue. 590 to 591 is a binding site for alpha-maltose 1-phosphate; the sequence is KF.

Belongs to the glycosyl hydrolase 13 family. GlgE subfamily. In terms of assembly, homodimer.

The enzyme catalyses alpha-maltose 1-phosphate + [(1-&gt;4)-alpha-D-glucosyl](n) = [(1-&gt;4)-alpha-D-glucosyl](n+2) + phosphate. Functionally, maltosyltransferase that uses maltose 1-phosphate (M1P) as the sugar donor to elongate linear or branched alpha-(1-&gt;4)-glucans. Is involved in a branched alpha-glucan biosynthetic pathway from trehalose, together with TreS, Mak and GlgB. The protein is Alpha-1,4-glucan:maltose-1-phosphate maltosyltransferase of Bifidobacterium animalis subsp. lactis (strain Bl-04 / DGCC2908 / RB 4825 / SD5219).